Reading from the N-terminus, the 931-residue chain is DNA mismatch repair protein MutS (931 aa).

Over residues 1–10 (MMDDTAMPAR) the composition is skewed to low complexity. Positions 1–34 (MMDDTAMPARAEADAAEDELAAPAGIDRTAKADK) are disordered. Residue 674–681 (GPNMAGKS) coordinates ATP.

Belongs to the DNA mismatch repair MutS family.

Functionally, this protein is involved in the repair of mismatches in DNA. It is possible that it carries out the mismatch recognition step. This protein has a weak ATPase activity. The protein is DNA mismatch repair protein MutS of Azorhizobium caulinodans (strain ATCC 43989 / DSM 5975 / JCM 20966 / LMG 6465 / NBRC 14845 / NCIMB 13405 / ORS 571).